The sequence spans 583 residues: Putative fatty-acid--CoA ligase fadD25 (583 aa).

Transmembrane regions (helical) follow at residues 77–97 (YVVS…LSIP), 109–129 (VFAD…DNVV), and 229–249 (FVLG…TSPI). A disordered region spans residues 353–375 (IVQFDPQKLPDGQAERTESDGGT).

It belongs to the ATP-dependent AMP-binding enzyme family.

The protein resides in the cell membrane. The protein is Putative fatty-acid--CoA ligase fadD25 (fadD25) of Mycobacterium tuberculosis (strain CDC 1551 / Oshkosh).